Reading from the N-terminus, the 172-residue chain is Adenylate kinase isoenzyme 6 (172 aa).

ATP is bound by residues Gly13, Gly15, Lys16, Thr17, and Thr18. Residues 33-56 (NVGDLAREGQLYDGYDEEYDCPIL) are NMPbind. The interval 108–118 (NRGYNEKKLKD) is LID. Residues Arg109 and Lys148 each coordinate ATP.

This sequence belongs to the adenylate kinase family. AK6 subfamily. As to quaternary structure, monomer and homodimer. Interacts with small ribosomal subunit protein uS11. Not a structural component of 43S pre-ribosomes, but transiently interacts with them by binding to uS11. Interacts with COIL (via C-terminus).

The protein localises to the cytoplasm. Its subcellular location is the nucleus. The protein resides in the nucleoplasm. It is found in the cajal body. It carries out the reaction AMP + ATP = 2 ADP. It catalyses the reaction ATP + H2O = ADP + phosphate + H(+). Functionally, broad-specificity nucleoside monophosphate (NMP) kinase that catalyzes the reversible transfer of the terminal phosphate group between nucleoside triphosphates and monophosphates. Also has ATPase activity. Involved in the late cytoplasmic maturation steps of the 40S ribosomal particles, specifically 18S rRNA maturation. While NMP activity is not required for ribosome maturation, ATPase activity is. Associates transiently with small ribosomal subunit protein uS11. ATP hydrolysis breaks the interaction with uS11. May temporarily remove uS11 from the ribosome to enable a conformational change of the ribosomal RNA that is needed for the final maturation step of the small ribosomal subunit. Its NMP activity may have a role in nuclear energy homeostasis. May be involved in regulation of Cajal body (CB) formation. This Bos taurus (Bovine) protein is Adenylate kinase isoenzyme 6.